A 939-amino-acid chain; its full sequence is Isoleucine--tRNA ligase (939 aa).

The short motif at proline 59–histidine 69 is the 'HIGH' region element. An L-isoleucyl-5'-AMP-binding site is contributed by glutamate 570. The 'KMSKS' region signature appears at lysine 611 to serine 615. Lysine 614 contacts ATP. Zn(2+)-binding residues include cysteine 902, cysteine 905, cysteine 922, and cysteine 925.

It belongs to the class-I aminoacyl-tRNA synthetase family. IleS type 1 subfamily. Monomer. Zn(2+) is required as a cofactor.

Its subcellular location is the cytoplasm. The enzyme catalyses tRNA(Ile) + L-isoleucine + ATP = L-isoleucyl-tRNA(Ile) + AMP + diphosphate. Its function is as follows. Catalyzes the attachment of isoleucine to tRNA(Ile). As IleRS can inadvertently accommodate and process structurally similar amino acids such as valine, to avoid such errors it has two additional distinct tRNA(Ile)-dependent editing activities. One activity is designated as 'pretransfer' editing and involves the hydrolysis of activated Val-AMP. The other activity is designated 'posttransfer' editing and involves deacylation of mischarged Val-tRNA(Ile). The chain is Isoleucine--tRNA ligase from Nitrosomonas europaea (strain ATCC 19718 / CIP 103999 / KCTC 2705 / NBRC 14298).